We begin with the raw amino-acid sequence, 822 residues long: AP-1 complex subunit gamma-1 (822 aa).

The interval 597–628 (EIVQTNGETEPAPLETKPPPSGPQPTSQANDL) is disordered. One can recognise a GAE domain in the interval 702-817 (AGIPSITAYS…QDLAEVNNFP (116 aa)).

This sequence belongs to the adaptor complexes large subunit family. Adaptor protein complex 1 (AP-1) is a heterotetramer composed of two large adaptins (gamma-type subunit AP1G1 and beta-type subunit AP1B1), a medium adaptin (mu-type subunit AP1M1 or AP1M2) and a small adaptin (sigma-type subunit AP1S1 or AP1S2 or AP1S3). Interacts (via GAE domain) with RABEP1. Interacts with EPS15. Interacts with SYNRG/gamma-synergin. Interacts (via GAE domain) with AP1AR (via coiled-coil domain). Interacts with CLN3 (via dileucine motif); this interaction facilitates lysosomal targeting. Interacts (via GAE domain) with AFTPH/aftiphilin; the interaction is required to recruit AFTPH/aftiphilin to the perinuclear region of the cell.

Its subcellular location is the golgi apparatus. The protein localises to the cytoplasmic vesicle. It localises to the clathrin-coated vesicle membrane. The protein resides in the cytoplasm. It is found in the perinuclear region. Its subcellular location is the clathrin-coated vesicle. The protein localises to the membrane. It localises to the clathrin-coated pit. Functionally, subunit of clathrin-associated adaptor protein complex 1 that plays a role in protein sorting in the late-Golgi/trans-Golgi network (TGN) and/or endosomes. The AP complexes mediate both the recruitment of clathrin to membranes and the recognition of sorting signals within the cytosolic tails of transmembrane cargo molecules. In association with AFTPH/aftiphilin in the aftiphilin/p200/gamma-synergin complex, involved in the trafficking of transferrin from early to recycling endosomes, and the membrane trafficking of furin and the lysosomal enzyme cathepsin D between the trans-Golgi network (TGN) and endosomes. The sequence is that of AP-1 complex subunit gamma-1 (AP1G1) from Pongo abelii (Sumatran orangutan).